The chain runs to 341 residues: tRNA N6-adenosine threonylcarbamoyltransferase (341 aa).

Fe cation contacts are provided by H110 and H114. Substrate-binding positions include 133-137 (LVSGG), D166, G179, and N276. Position 304 (D304) interacts with Fe cation.

Belongs to the KAE1 / TsaD family. The cofactor is Fe(2+).

It localises to the cytoplasm. The catalysed reaction is L-threonylcarbamoyladenylate + adenosine(37) in tRNA = N(6)-L-threonylcarbamoyladenosine(37) in tRNA + AMP + H(+). Functionally, required for the formation of a threonylcarbamoyl group on adenosine at position 37 (t(6)A37) in tRNAs that read codons beginning with adenine. Is involved in the transfer of the threonylcarbamoyl moiety of threonylcarbamoyl-AMP (TC-AMP) to the N6 group of A37, together with TsaE and TsaB. TsaD likely plays a direct catalytic role in this reaction. This chain is tRNA N6-adenosine threonylcarbamoyltransferase, found in Saccharophagus degradans (strain 2-40 / ATCC 43961 / DSM 17024).